The sequence spans 338 residues: tRNA N6-adenosine threonylcarbamoyltransferase (338 aa).

H111 and H115 together coordinate Fe cation. Residues 134-138 (LVSGG), D167, G180, and N272 contribute to the substrate site. D300 contributes to the Fe cation binding site.

It belongs to the KAE1 / TsaD family. The cofactor is Fe(2+).

The protein resides in the cytoplasm. The catalysed reaction is L-threonylcarbamoyladenylate + adenosine(37) in tRNA = N(6)-L-threonylcarbamoyladenosine(37) in tRNA + AMP + H(+). Required for the formation of a threonylcarbamoyl group on adenosine at position 37 (t(6)A37) in tRNAs that read codons beginning with adenine. Is involved in the transfer of the threonylcarbamoyl moiety of threonylcarbamoyl-AMP (TC-AMP) to the N6 group of A37, together with TsaE and TsaB. TsaD likely plays a direct catalytic role in this reaction. In Shewanella halifaxensis (strain HAW-EB4), this protein is tRNA N6-adenosine threonylcarbamoyltransferase.